A 1047-amino-acid chain; its full sequence is Atrial natriuretic peptide receptor 2 (1047 aa).

Residues Met-1–Gly-16 form the signal peptide. The Extracellular portion of the chain corresponds to Val-17 to Ile-458. N-linked (GlcNAc...) asparagine glycosylation is found at Asn-24 and Asn-35. Cys-75 and Cys-101 form a disulfide bridge. Residues Asn-161, Asn-195, Asn-244, Asn-277, and Asn-349 are each glycosylated (N-linked (GlcNAc...) asparagine). The chain crosses the membrane as a helical span at residues Val-459–Phe-478. Residues Arg-479–Leu-1047 lie on the Cytoplasmic side of the membrane. Phosphoserine is present on Ser-513. A Protein kinase domain is found at Ser-513–Ile-786. Residue Thr-516 is modified to Phosphothreonine. A phosphoserine mark is found at Ser-518, Ser-522, Ser-523, and Ser-526. Phosphothreonine is present on Thr-529. Residues Thr-861 to Glu-991 form the Guanylate cyclase domain.

The protein belongs to the adenylyl cyclase class-4/guanylyl cyclase family. In terms of processing, phosphorylated. Phosphorylation of the protein kinase-like domain is required for full activation by CNP. Glycosylated.

The protein resides in the cell membrane. It catalyses the reaction GTP = 3',5'-cyclic GMP + diphosphate. In terms of biological role, receptor for the C-type natriuretic peptide NPPC/CNP hormone. Has guanylate cyclase activity upon binding of its ligand. May play a role in the regulation of skeletal growth. The sequence is that of Atrial natriuretic peptide receptor 2 (Npr2) from Rattus norvegicus (Rat).